The primary structure comprises 329 residues: Interleukin-12 subunit beta (329 aa).

The first 22 residues, 1–22 (MCHQWLVLSWFSLVLLASPLMA), serve as a signal peptide directing secretion. The Ig-like C2-type domain maps to 29 to 106 (DVYVVELDWY…LSHSHLLLHK (78 aa)). An intrachain disulfide couples C50 to C90. N125, N135, and N223 each carry an N-linked (GlcNAc...) asparagine glycan. The Fibronectin type-III domain maps to 238 to 329 (PPKNLQLKPL…WSEWASVSCS (92 aa)).

Belongs to the IL-12B family. In terms of assembly, heterodimer with IL12A; disulfide-linked. The heterodimer is known as interleukin IL-12. Heterodimer with IL23A; disulfide-linked. The heterodimer is known as interleukin IL-23. Also secreted as a monomer. Interacts with NBR1; this interaction promotes IL-12 secretion.

Its subcellular location is the secreted. In terms of biological role, cytokine that can act as a growth factor for activated T and NK cells, enhance the lytic activity of NK/lymphokine-activated killer cells, and stimulate the production of IFN-gamma by resting PBMC. Its function is as follows. Associates with IL23A to form the IL-23 interleukin, a heterodimeric cytokine which functions in innate and adaptive immunity. IL-23 may constitute with IL-17 an acute response to infection in peripheral tissues. IL-23 binds to a heterodimeric receptor complex composed of IL12RB1 and IL23R, activates the Jak-Stat signaling cascade, stimulates memory rather than naive T-cells and promotes production of pro-inflammatory cytokines. IL-23 induces autoimmune inflammation and thus may be responsible for autoimmune inflammatory diseases and may be important for tumorigenesis. In Equus caballus (Horse), this protein is Interleukin-12 subunit beta (IL12B).